We begin with the raw amino-acid sequence, 140 residues long: Putative pre-16S rRNA nuclease (140 aa).

It belongs to the YqgF nuclease family.

It localises to the cytoplasm. Could be a nuclease involved in processing of the 5'-end of pre-16S rRNA. This is Putative pre-16S rRNA nuclease from Yersinia pseudotuberculosis serotype O:1b (strain IP 31758).